A 210-amino-acid polypeptide reads, in one-letter code: Amelogenin, X isoform (210 aa).

The first 16 residues, 1–16 (MGTWILFACLLGAAFA), serve as a signal peptide directing secretion. Serine 32 carries the phosphoserine modification. Low complexity-rich tracts occupy residues 109–119 (VAPQQPMMPVP) and 136–169 (PSAQ…HPMQ). A disordered region spans residues 109–187 (VAPQQPMMPV…PPLFSMQPLS (79 aa)). The segment covering 170 to 179 (PLAPQPPLPP) has biased composition (pro residues).

Belongs to the amelogenin family. As to quaternary structure, interacts with KRT5. In terms of processing, several forms are produced by C-terminal processing. Post-translationally, phosphorylated by FAM20C in vitro.

The protein localises to the secreted. Its subcellular location is the extracellular space. It is found in the extracellular matrix. In terms of biological role, plays a role in the biomineralization of teeth. Seems to regulate the formation of crystallites during the secretory stage of tooth enamel development. Thought to play a major role in the structural organization and mineralization of developing enamel. This chain is Amelogenin, X isoform (Amelx), found in Mus musculus (Mouse).